The primary structure comprises 193 residues: Adenylate kinase (193 aa).

11 to 16 (GAGKGT) serves as a coordination point for ATP. The NMP stretch occupies residues 31 to 60 (STGDLLRAEVKAQTPLGCQAKVYMDAGELV). AMP is bound by residues threonine 32, arginine 37, 58–60 (ELV), 85–88 (GFPR), and glutamine 92. The interval 126–136 (ARGKEQGRSDD) is LID. Residue arginine 127 coordinates ATP. AMP is bound by residues arginine 133 and arginine 145. An ATP-binding site is contributed by glutamine 173.

It belongs to the adenylate kinase family. Monomer.

The protein localises to the cytoplasm. It catalyses the reaction AMP + ATP = 2 ADP. Its pathway is purine metabolism; AMP biosynthesis via salvage pathway; AMP from ADP: step 1/1. In terms of biological role, catalyzes the reversible transfer of the terminal phosphate group between ATP and AMP. Plays an important role in cellular energy homeostasis and in adenine nucleotide metabolism. This chain is Adenylate kinase, found in Synechococcus sp. (strain JA-2-3B'a(2-13)) (Cyanobacteria bacterium Yellowstone B-Prime).